The primary structure comprises 123 residues: Putative iron-sulfur cluster insertion protein ErpA (123 aa).

Iron-sulfur cluster contacts are provided by C51, C115, and C117.

The protein belongs to the HesB/IscA family. In terms of assembly, homodimer. It depends on iron-sulfur cluster as a cofactor.

Its function is as follows. Required for insertion of 4Fe-4S clusters. The protein is Putative iron-sulfur cluster insertion protein ErpA of Bordetella avium (strain 197N).